The sequence spans 215 residues: Probable transaldolase (215 aa).

Catalysis depends on Lys84, which acts as the Schiff-base intermediate with substrate.

It belongs to the transaldolase family. Type 3B subfamily.

It is found in the cytoplasm. The catalysed reaction is D-sedoheptulose 7-phosphate + D-glyceraldehyde 3-phosphate = D-erythrose 4-phosphate + beta-D-fructose 6-phosphate. It functions in the pathway carbohydrate degradation; pentose phosphate pathway; D-glyceraldehyde 3-phosphate and beta-D-fructose 6-phosphate from D-ribose 5-phosphate and D-xylulose 5-phosphate (non-oxidative stage): step 2/3. In terms of biological role, transaldolase is important for the balance of metabolites in the pentose-phosphate pathway. In Exiguobacterium sibiricum (strain DSM 17290 / CCUG 55495 / CIP 109462 / JCM 13490 / 255-15), this protein is Probable transaldolase.